The sequence spans 503 residues: MIGRTREQKQGGELSVEDIQDPFLVSIHIIADPGESKCLQEAIDRLLVWIHPDLQLFCVSERRVLKKKKPSKSFASHPALAIILFLQEDYGEEQILHLHKCFQKPPWQFHHTERVHGKFLPYMPCNQDFFTLANGTPLWAIRQVHYGKEIIRFTIYCSYENFADMMKMYELIIKKRVWRKKTDFCVFPVYSNMDFDIEFSLKRLVKGQKPVPLESSLLEFRVRDFGQLIPLLPNQCSPISEGRWKTEDHDGNKILLQQAQCLARKTAWKHQNYASRTAAMTQPLSIAPRSRKLKYGKHKARASHGQVQHFGGSQTDFPMGQVDTFRSLKFPSEAAQAFQRSKSLYCLPTMSTFPSCHSFPMSEPHPCFGLDTYETPAWRISPKINIDDLEGVEETDVDTGMKLSSSDLSVVSAYSPLNGPCSDLEASLPSEGALAQSDTVPGRQNHSSDSLHSVSDISSSPCPVFPSTPAQSQKHILSHYHQLSEITSHLSETLNIEEEEFYI.

Positions 434–470 are disordered; that stretch reads LAQSDTVPGRQNHSSDSLHSVSDISSSPCPVFPSTPA. Residues 436-445 show a composition bias toward polar residues; the sequence is QSDTVPGRQN. Residues 447–460 are compositionally biased toward low complexity; that stretch reads SSDSLHSVSDISSS.

Belongs to the FAM124 family.

The chain is Protein FAM124A (fam124a) from Xenopus tropicalis (Western clawed frog).